Reading from the N-terminus, the 886-residue chain is Putative leucine-rich repeat receptor-like serine/threonine-protein kinase At2g14440 (886 aa).

Residues 1–23 (METRSKLMLLACATFSIISLVKS) form the signal peptide. Topologically, residues 24-528 (QNQQGFISLY…KHQPKSWLVA (505 aa)) are extracellular. N49, N69, N232, N236, N259, N292, N434, N447, N458, and N471 each carry an N-linked (GlcNAc...) asparagine glycan. 4 LRR repeats span residues 413-436 (RIISLDLSSSGLTGVITPSIQNLT), 437-460 (MLRELDLSNNNLTGVIPPSLQNLT), 461-483 (MLRELDLSNNNLTGEVPEFLATI), and 485-507 (PLLVIHLRGNNLRGSVPQALQDR). A helical membrane pass occupies residues 529–549 (IVASISCVAVTIIVLVLIFIF). The Cytoplasmic segment spans residues 550–886 (RRRKSSTRKV…TFISDIPSAR (337 aa)). The 270-residue stretch at 581–850 (NNFEVVLGKG…NMTRVAHELN (270 aa)) folds into the Protein kinase domain. ATP is bound by residues 587–595 (LGKGGFGVV) and K608. Y653 is modified (phosphotyrosine). Catalysis depends on D705, which acts as the Proton acceptor. Residue S739 is modified to Phosphoserine. T740 and T745 each carry phosphothreonine. Position 753 is a phosphotyrosine (Y753). The tract at residues 863 to 886 (SQDQNSSKSSGHTVTFISDIPSAR) is disordered. The span at 865–878 (DQNSSKSSGHTVTF) shows a compositional bias: polar residues.

The protein belongs to the protein kinase superfamily. Ser/Thr protein kinase family.

Its subcellular location is the cell membrane. The enzyme catalyses L-seryl-[protein] + ATP = O-phospho-L-seryl-[protein] + ADP + H(+). It catalyses the reaction L-threonyl-[protein] + ATP = O-phospho-L-threonyl-[protein] + ADP + H(+). This chain is Putative leucine-rich repeat receptor-like serine/threonine-protein kinase At2g14440, found in Arabidopsis thaliana (Mouse-ear cress).